A 475-amino-acid chain; its full sequence is Ribulose bisphosphate carboxylase large chain (475 aa).

Residues 1 to 2 (MS) constitute a propeptide that is removed on maturation. Position 3 is an N-acetylproline (proline 3). Residue lysine 14 is modified to N6,N6,N6-trimethyllysine. Substrate is bound by residues asparagine 123 and threonine 173. The active-site Proton acceptor is the lysine 175. Lysine 177 contributes to the substrate binding site. The Mg(2+) site is built by lysine 201, aspartate 203, and glutamate 204. Position 201 is an N6-carboxylysine (lysine 201). Histidine 294 acts as the Proton acceptor in catalysis. Residues arginine 295, histidine 327, and serine 379 each coordinate substrate.

The protein belongs to the RuBisCO large chain family. Type I subfamily. As to quaternary structure, heterohexadecamer of 8 large chains and 8 small chains; disulfide-linked. The disulfide link is formed within the large subunit homodimers. Requires Mg(2+) as cofactor. The disulfide bond which can form in the large chain dimeric partners within the hexadecamer appears to be associated with oxidative stress and protein turnover.

The protein resides in the plastid. It is found in the chloroplast. It carries out the reaction 2 (2R)-3-phosphoglycerate + 2 H(+) = D-ribulose 1,5-bisphosphate + CO2 + H2O. The catalysed reaction is D-ribulose 1,5-bisphosphate + O2 = 2-phosphoglycolate + (2R)-3-phosphoglycerate + 2 H(+). RuBisCO catalyzes two reactions: the carboxylation of D-ribulose 1,5-bisphosphate, the primary event in carbon dioxide fixation, as well as the oxidative fragmentation of the pentose substrate in the photorespiration process. Both reactions occur simultaneously and in competition at the same active site. The polypeptide is Ribulose bisphosphate carboxylase large chain (Afrocarpus gracilior (African fern pine)).